Reading from the N-terminus, the 717-residue chain is Probable cyclic nucleotide-gated ion channel 5 (717 aa).

Residues 1–102 (MAGKRENFVR…DKFLLYCNKL (102 aa)) are Cytoplasmic-facing. The chain crosses the membrane as a helical span at residues 103-123 (FVASCILSVFVDPFFFYLPVI). Topologically, residues 124-136 (NAESKCLGIDRKL) are extracellular. The chain crosses the membrane as a helical span at residues 137–157 (AITASTLRTFIDVFYLAHMAL). Residues 158 to 190 (QLRTAYIAPSSRVFGRGELVIDPAQIAKRYLQR) lie on the Cytoplasmic side of the membrane. The helical transmembrane segment at 191–211 (WFIIDFLSVLPLPQIVVWRFL) threads the bilayer. Topologically, residues 212–224 (QSSNGSDVLATKQ) are extracellular. A helical transmembrane segment spans residues 225 to 245 (ALLFIVLVQYIPRFLRVLPLT). The Cytoplasmic segment spans residues 246 to 265 (SELKRTAGVFAETAWAGAAY). A helical membrane pass occupies residues 266 to 286 (YLLLYMLASHIVGAFWYLLAL). Over 287–391 (ERNDACWQEA…GQGLETSTYP (105 aa)) the chain is Extracellular. A helical membrane pass occupies residues 392 to 412 (MEIIFSISLAISGLILFALLI). Residues 413–717 (GNMQTYLQSL…KPPEPDFTAD (305 aa)) are Cytoplasmic-facing. A nucleoside 3',5'-cyclic phosphate is bound by residues 498 to 628 (LFKS…TFRF) and E569. The tract at residues 614-629 (FRRLHSRQVQHTFRFY) is calmodulin-binding. The region spanning 634–663 (RTWAACFIQAAWRRYCKRKKMEEAEAEAAA) is the IQ domain.

The protein belongs to the cyclic nucleotide-gated cation channel (TC 1.A.1.5) family. As to quaternary structure, homotetramer or heterotetramer.

The protein resides in the cell membrane. In terms of biological role, probable cyclic nucleotide-gated ion channel. The protein is Probable cyclic nucleotide-gated ion channel 5 (CNGC5) of Arabidopsis thaliana (Mouse-ear cress).